Reading from the N-terminus, the 353-residue chain is Heat-inducible transcription repressor HrcA (353 aa).

The protein belongs to the HrcA family.

Its function is as follows. Negative regulator of class I heat shock genes (grpE-dnaK-dnaJ and groELS operons). Prevents heat-shock induction of these operons. In Anaeromyxobacter dehalogenans (strain 2CP-1 / ATCC BAA-258), this protein is Heat-inducible transcription repressor HrcA.